The sequence spans 364 residues: Cobalt-precorrin-5B C(1)-methyltransferase (364 aa).

It belongs to the CbiD family.

It carries out the reaction Co-precorrin-5B + S-adenosyl-L-methionine = Co-precorrin-6A + S-adenosyl-L-homocysteine. It participates in cofactor biosynthesis; adenosylcobalamin biosynthesis; cob(II)yrinate a,c-diamide from sirohydrochlorin (anaerobic route): step 6/10. In terms of biological role, catalyzes the methylation of C-1 in cobalt-precorrin-5B to form cobalt-precorrin-6A. The sequence is that of Cobalt-precorrin-5B C(1)-methyltransferase from Pseudomonas entomophila (strain L48).